The sequence spans 141 residues: Lysozyme 1 (141 aa).

The N-terminal stretch at 1 to 19 is a signal peptide; sequence MKFFIVLVAALALAAPAMG. In terms of domain architecture, C-type lysozyme spans 20–141; sequence KTFTRCSLAR…GSLPSINDCF (122 aa). Disulfide bonds link cysteine 25–cysteine 140, cysteine 46–cysteine 130, cysteine 81–cysteine 97, and cysteine 93–cysteine 111. Glutamate 51 is a catalytic residue. An N-linked (GlcNAc...) asparagine glycan is attached at asparagine 65. Aspartate 69 is an active-site residue. N-linked (GlcNAc...) asparagine glycosylation is present at asparagine 104.

This sequence belongs to the glycosyl hydrolase 22 family.

The catalysed reaction is Hydrolysis of (1-&gt;4)-beta-linkages between N-acetylmuramic acid and N-acetyl-D-glucosamine residues in a peptidoglycan and between N-acetyl-D-glucosamine residues in chitodextrins.. In terms of biological role, may not function as a self-defense protein, but as a digestive enzyme, probably in the gut of the insect body. Inactive towards Micrococcus luteus. Active toward glycol chitin. The chain is Lysozyme 1 from Musca domestica (House fly).